Consider the following 104-residue polypeptide: Large ribosomal subunit protein uL24 (104 aa).

Belongs to the universal ribosomal protein uL24 family. As to quaternary structure, part of the 50S ribosomal subunit.

One of two assembly initiator proteins, it binds directly to the 5'-end of the 23S rRNA, where it nucleates assembly of the 50S subunit. In terms of biological role, one of the proteins that surrounds the polypeptide exit tunnel on the outside of the subunit. This chain is Large ribosomal subunit protein uL24, found in Anaplasma phagocytophilum (strain HZ).